The following is a 406-amino-acid chain: Testis-specific Y-encoded-like protein 5 (406 aa).

Residues 1–25 are compositionally biased toward basic residues; it reads MSGRSRGRKSSRAKGRGKGRARARV. Disordered regions lie at residues 1 to 67, 132 to 164, and 382 to 406; these read MSGR…PAEL, IGNRRVPGRKAPDTRSATGRGPQATVSGKPKMA, and RGEKGKEERPGPAKLSPAPAVRQPN. Residues 27–38 are compositionally biased toward basic and acidic residues; that stretch reads AAAEDAWHDEKP. The span at 49–62 shows a compositional bias: low complexity; that stretch reads AAAQVQAGAAQGGA. The span at 382–392 shows a compositional bias: basic and acidic residues; the sequence is RGEKGKEERPG.

Belongs to the nucleosome assembly protein (NAP) family. As to quaternary structure, interacts with USP7.

Involved in modulation of cell growth and cellular response to gamma radiation probably via regulation of the Akt signaling pathway. Involved in regulation of p53/TP53. Suppresses p53/TP53 protein levels and promotes its ubiquitination; the function is dependent on USP7 and independent on MDM2. Proposed to displace p53/TP53 from interaction with USP7. The protein is Testis-specific Y-encoded-like protein 5 (Tspyl5) of Mus musculus (Mouse).